A 272-amino-acid chain; its full sequence is MLQACKMEGFSLTAPPSDDLVTYDSELYQRPMHDYYSFVGSDGESHSDHYWDFSAHHVHNNEFENFPENHFTELQSVQPPQLQQLYRHMELEQMHVLDTPMVPPHTGLSHQVSYMPRMCFPYQTLSPAHQQSSDEEEGERQSPPLEVSDGEADGLEPGPGLLHGETGSKKKIRLYQFLLDLLRSGDMKDSIWWVDKDKGTFQFSSKHKEALAHRWGIQKGNRKKMTYQKMARALRNYGKTGEVKKVKKKLTYQFSGEVLGRGGLAERRLPPH.

Residues 126-165 (SPAHQQSSDEEEGERQSPPLEVSDGEADGLEPGPGLLHGE) are disordered. A phosphoserine mark is found at serine 142 and serine 148. The span at 155–165 (LEPGPGLLHGE) shows a compositional bias: low complexity. The segment at residues 172 to 255 (IRLYQFLLDL…VKKKLTYQFS (84 aa)) is a DNA-binding region (ETS). Residues lysine 219, arginine 232, arginine 235, and lysine 245 each contribute to the DNA site.

The protein belongs to the ETS family. Binds DNA as a monomer. Can form homomers. Directly interacts with CEBPD/NF-IL6-beta; this interaction does not affect DNA-binding properties of each partner. Interacts with NONO/p54(nrb). Interacts with RUNX1/AML1. Interacts with GFI1; the interaction represses SPI1 transcriptional activity, hence blocks SPI1-induced macrophage differentiation of myeloid progenitor cells. Interacts with CEBPE. Interacts with IRF4/Pip and IRF8. Interacts with JUN. Interacts with RB1. Interacts with TBP. As to expression, expressed in spleen, thymus and bone-marrow macrophages.

The protein resides in the nucleus. Its activity is regulated as follows. Transcriptional activity at macrophage-specific genes is inhibited by interaction with GFI1, which results in inhibition of SPI1-induced macrophage differentiation of myeloid progenitor cells, but not that of the granulocyte lineage. Its function is as follows. Pioneer transcription factor, which controls hematopoietic cell fate by decompacting stem cell heterochromatin and allowing other transcription factors to enter otherwise inaccessible genomic sites. Once in open chromatin, can directly control gene expression by binding genetic regulatory elements and can also more broadly influence transcription by recruiting transcription factors, such as interferon regulatory factors (IRFs), to otherwise inaccessible genomic regions. Transcriptionally activates genes important for myeloid and lymphoid lineages, such as CSF1R. Transcriptional activation from certain promoters, possibly containing low affinity binding sites, is achieved cooperatively with other transcription factors. FCER1A transactivation is achieved in cooperation with GATA1. May be particularly important for the pro- to pre-B cell transition. Binds (via the ETS domain) onto the purine-rich DNA core sequence 5'-GAGGAA-3', also known as the PU-box. In vitro can bind RNA and interfere with pre-mRNA splicing. In Mus musculus (Mouse), this protein is Transcription factor PU.1 (Spi1).